The chain runs to 258 residues: UPF0246 protein YaaA (258 aa).

It belongs to the UPF0246 family.

The protein is UPF0246 protein YaaA of Escherichia coli O8 (strain IAI1).